The following is a 382-amino-acid chain: Mannitol-1-phosphate 5-dehydrogenase (382 aa).

3–14 lines the NAD(+) pocket; it reads ALHFGAGNIGRG.

This sequence belongs to the mannitol dehydrogenase family.

The catalysed reaction is D-mannitol 1-phosphate + NAD(+) = beta-D-fructose 6-phosphate + NADH + H(+). The protein is Mannitol-1-phosphate 5-dehydrogenase of Tolumonas auensis (strain DSM 9187 / NBRC 110442 / TA 4).